An 876-amino-acid chain; its full sequence is GATOR2 complex protein MIOS (876 aa).

WD repeat units lie at residues 59 to 101 (SDTP…NSKS), 112 to 156 (KHAR…SPEA), 182 to 222 (GQND…QKTF), 224 to 262 (NTKAIQGVTVDPHFQDRVASYFEGQVAIWDLRKFEKPVF), 266 to 307 (EQPK…MPFG), and 400 to 440 (RAQS…KQYT). Residues 738–784 (VSCNFCGKSISYSCSAMPHQGRGFSQYGVSGSPTKSKVTSCPGCRKP) form a C4-type zinc finger. 13 residues coordinate Zn(2+): Cys740, Cys743, Cys778, Cys781, Cys791, Cys830, Cys833, His835, His838, His841, Cys852, Cys857, and Cys861. The RING-type; atypical zinc finger occupies 785–866 (LPRCALCLMN…CTCKCMQLDT (82 aa)).

This sequence belongs to the WD repeat mio family. In terms of assembly, component of the GATOR2 subcomplex, composed of MIOS, SEC13, SEH1L, WDR24 and WDR59. The GATOR2 complex interacts with CASTOR1 and CASTOR2; the interaction is negatively regulated by arginine. The GATOR2 complex interacts with SESN1, SESN2 and SESN3; the interaction is negatively regulated by amino acids. Interacts with SAR1; the interaction is direct, disrupted by leucine and mediates the interaction of SAR1 with the GATOR2 complex to negatively regulate the TORC1 signaling upon leucine deprivation.

The protein localises to the lysosome membrane. With respect to regulation, the GATOR2 complex is negatively regulated by the upstream amino acid sensors CASTOR1 and SESN2, which sequester the GATOR2 complex in absence of amino acids. In the presence of abundant amino acids, GATOR2 is released from CASTOR1 and SESN2 and activated. As a component of the GATOR2 complex, functions as an activator of the amino acid-sensing branch of the mTORC1 signaling pathway. The GATOR2 complex indirectly activates mTORC1 through the inhibition of the GATOR1 subcomplex. GATOR2 probably acts as an E3 ubiquitin-protein ligase toward GATOR1. In the presence of abundant amino acids, the GATOR2 complex mediates ubiquitination of the NPRL2 core component of the GATOR1 complex, leading to GATOR1 inactivation. In the absence of amino acids, GATOR2 is inhibited, activating the GATOR1 complex. Within the GATOR2 complex, MIOS is required to prevent autoubiquitination of WDR24, the catalytic subunit of the complex. The chain is GATOR2 complex protein MIOS from Danio rerio (Zebrafish).